The chain runs to 144 residues: Large ribosomal subunit protein uL16 (144 aa).

Residues 1 to 16 show a composition bias toward basic residues; sequence MLIPKRVKYRKQHRGR. A disordered region spans residues 1–23; that stretch reads MLIPKRVKYRKQHRGRPGGGMAK.

It belongs to the universal ribosomal protein uL16 family. As to quaternary structure, part of the 50S ribosomal subunit.

In terms of biological role, binds 23S rRNA and is also seen to make contacts with the A and possibly P site tRNAs. This chain is Large ribosomal subunit protein uL16, found in Pelotomaculum thermopropionicum (strain DSM 13744 / JCM 10971 / SI).